Reading from the N-terminus, the 164-residue chain is UPF0304 protein YfbU (164 aa).

The protein belongs to the UPF0304 family.

The polypeptide is UPF0304 protein YfbU (Escherichia coli O127:H6 (strain E2348/69 / EPEC)).